The sequence spans 246 residues: Neurotrophic factor BDNF precursor form (246 aa).

The signal sequence occupies residues 1–18; the sequence is MTILFLTMVISYFSCMKA. Positions 19–127 are excised as a propeptide; sequence APMKEASVRG…AANMSMRVRR (109 aa). The N-linked (GlcNAc...) asparagine glycan is linked to Asn-120. Intrachain disulfides connect Cys-140–Cys-207, Cys-185–Cys-236, and Cys-195–Cys-238.

This sequence belongs to the NGF-beta family.

Its subcellular location is the secreted. In terms of biological role, important signaling molecule that activates signaling cascades downstream of NTRK2. During development, promotes the survival and differentiation of selected neuronal populations of the peripheral and central nervous systems. Participates in axonal growth, pathfinding and in the modulation of dendritic growth and morphology. Major regulator of synaptic transmission and plasticity at adult synapses in many regions of the CNS. The versatility of BDNF is emphasized by its contribution to a range of adaptive neuronal responses including long-term potentiation (LTP), long-term depression (LTD), certain forms of short-term synaptic plasticity, as well as homeostatic regulation of intrinsic neuronal excitability. The sequence is that of Neurotrophic factor BDNF precursor form (BDNF) from Gallus gallus (Chicken).